A 317-amino-acid polypeptide reads, in one-letter code: Succinate receptor 1 (317 aa).

Topologically, residues 1-27 (MAQNLSCENWLALENILKKYYLSAFYG) are extracellular. Residue asparagine 4 is glycosylated (N-linked (GlcNAc...) asparagine). Residues 28–48 (IEFIVGMLGNFTVVFGYLFCM) traverse the membrane as a helical segment. Residues 49–55 (KNWNSSN) lie on the Cytoplasmic side of the membrane. The helical transmembrane segment at 56-76 (VYLFNLSISDLAFLCTLPMLI) threads the bilayer. The Extracellular portion of the chain corresponds to 77-99 (RSYATGNWTYGDVLCISNRYVLH). Cysteine 91 and cysteine 168 are disulfide-bonded. A helical transmembrane segment spans residues 100-120 (ANLYTSILFLTFISIDRYLLM). Residues 121-133 (KFPFREHILQKKE) are Cytoplasmic-facing. The chain crosses the membrane as a helical span at residues 134–154 (FAILISLAVWVLVTLEVLPML). The Extracellular segment spans residues 155–181 (TFITSTPIEKGDSCVDYASSGNPKYSL). Residues 182-202 (IYSLCLTLLGFLIPLSVMCFF) traverse the membrane as a helical segment. The Cytoplasmic portion of the chain corresponds to 203-226 (YYKMVVFLKKRSQQQATVLSLNKP). The chain crosses the membrane as a helical span at residues 227 to 247 (LRLVVLAVVIFSVLFTPYHIM). The Extracellular segment spans residues 248-276 (RNVRIASRLDSWPQGCSQKAIKCLYILTR). A helical transmembrane segment spans residues 277–297 (PLAFLNSAVNPIFYFLVGDHF). Topologically, residues 298–317 (RDMLFSKLRQYFKSLTSFRL) are cytoplasmic.

It belongs to the G-protein coupled receptor 1 family. In terms of tissue distribution, expressed in retina.

It is found in the cell membrane. G protein-coupled receptor for succinate able to mediate signaling through Gq/GNAQ or Gi/GNAI second messengers depending on the cell type and the processes regulated. Succinate-SUCNR1 signaling serves as a link between metabolic stress, inflammation and energy homeostasisn. In macrophages, plays a range of immune-regulatory roles. During inflammation, succinate-SUCNR1 signaling may act as an anti-inflammatory mediator or boost inflammation depending on the inflammatory status of cells. Hyperpolarizes M2 macrophages versus M1 phenotype through Gq signaling by regulating the transcription of genes involved in immune function. In activated M1 macrophages, plays a pro-inflammatory role in response to LPS. Expressed in dendritic cells, where it is involved in the sensing of immunological danger and enhances immunity. Mediates succinate triggered intracelleular calcium mobilization, induces migratory responses and acts in synergy with Toll-like receptor ligands for the production of proinflammatory cytokines as well as an enhancement of antigen-specific activation of helper T cells. In the small intestine, mediates the activation of tuft cells by dietary succinate and triggers type 2 immunity. In adipocytes, plays an important role in the control of energy metabolism. In response to succinate, controls leptin expression in an AMPK-JNK-CEBPA-dependent as well as circadian clock-regulated manner. In muscle tissue, is expressed in non-muscle cells and coordinates muscle remodeling in response to the succinate produced during exercise training in a paracrine manner. In retina, acts as a mediator of vessel growth during retinal development. In response to succinate, regulates the production of angiogenic factors, including VEGF, by retinal ganglion neurons. The protein is Succinate receptor 1 (Sucnr1) of Rattus norvegicus (Rat).